Here is a 373-residue protein sequence, read N- to C-terminus: Gibberellin 3-beta-dioxygenase 2 (373 aa).

The region spanning 203–304 is the Fe2OG dioxygenase domain; the sequence is MTATVHLNWY…RVSLGYFLGP (102 aa). Residue Tyr-212 participates in 2-oxoglutarate binding. The Fe cation site is built by His-227, Asp-229, and His-285. Residues Arg-295 and Ser-297 each contribute to the 2-oxoglutarate site.

Belongs to the iron/ascorbate-dependent oxidoreductase family. The cofactor is L-ascorbate. Fe(2+) serves as cofactor. Highly expressed in elongating leaves. Expressed in unopened flowers. Expressed at low levels in leaf blades, shoots, rachis, stems and young panicles.

The enzyme catalyses gibberellin A20 + 2-oxoglutarate + O2 = gibberellin A1 + succinate + CO2. The protein operates within plant hormone biosynthesis; gibberellin biosynthesis. In terms of biological role, catalyzes the 3-beta-hydroxylation of the inactive gibberellin precursors, leading to the formation of bioactive gibberellins. In vitro, converts the precursors GA20, GA5, GA44 and GA9 to the corresponding 3-beta-hydroxylated active products GA1, GA3, GA38 and GA4, respectively. Involved in the production of bioactive GA for vegetative growth and development. Controls the elongation of the vegetative shoot and plant height by the regulation of active gibberellin levels. The protein is Gibberellin 3-beta-dioxygenase 2 of Oryza sativa subsp. japonica (Rice).